The chain runs to 431 residues: Mannan endo-1,4-beta-mannosidase 7 (431 aa).

The signal sequence occupies residues 1 to 25 (MKLLALFPFLAIVIQLSCWELGTDA). Residues Trp87 and Asn202 each coordinate substrate. Glu203 (proton donor) is an active-site residue. Tyr280 contributes to the substrate binding site. The Nucleophile role is filled by Glu320. Trp362 contributes to the substrate binding site.

The protein belongs to the glycosyl hydrolase 5 (cellulase A) family. In terms of tissue distribution, expressed in stems, flowers, siliques and seeds. Expressed in root vasculature, leaf hydathodes, anther filaments, stigma, sepal vasculature, at the base and apical parts of siliques, and replum. Expressed in the micropylar endosperm and radicle tip in early germinating seeds.

Its subcellular location is the secreted. The catalysed reaction is Random hydrolysis of (1-&gt;4)-beta-D-mannosidic linkages in mannans, galactomannans and glucomannans.. Required for both, loosening of the micropylar endosperm, and rupture of the seed coat in germinating seeds. May participate in the hydrolysis of the mannans in the cell wall of germinating seeds. The sequence is that of Mannan endo-1,4-beta-mannosidase 7 (MAN7) from Arabidopsis thaliana (Mouse-ear cress).